The primary structure comprises 596 residues: MSFRSAEGVSIMQALAMTVAEIPVFLYSTFGQSIFSQLKLSPSLKKVLFATALGSVALALTAHQLKRRGRKRKQTLGKEAQKPVGIPEQLLRSSRPASLKRGPVPARQMMSPSTRSNDTLSGVSSIAQSKHSSSSHSIASMRVPSSPNQSVNAGAAWEAEPVAEEPAVGEDANAENLYLMGMELFEEALRKWELALNIRHRSHSRASASNSQGSELVERHSPEVRNHQFAERLETLLHRAYHLQEDFGSTIPPDSLLADLESEGTLILPTLGSSHPIQDDDATTVTSDDSFFSAAELFETFSLEDSFHLLKPAALYEEALSLVKDGDVACRSLRTELLECYSDQDFLAKLHCVRQAFQVLLLDETHRMFFMETGKQMISGLLVKANKSPKAFLESYEDMLQYTQREETWPVSKMELEGRGVVCMNFFDIVLDFILMDAFEDLESPPSSVVAVLRNRWLSDSFKETALATACWSVLKAKRRLLMVPDGFIAHFYVISEHVSPVLAFGFLGPHQHLSEVCTIFKQQIVQYLKDMFDHDKVRFTSVPSLAEDILRLSHRRADILMGYLGIENLPETNGALPKSPCQAESGNLDASGQQD.

2 consecutive transmembrane segments (helical) span residues Ile-11–Gly-31 and Leu-40–Leu-60. 2 disordered regions span residues Arg-67–Glu-158 and Ala-576–Asp-596. The span at Met-110–Val-123 shows a compositional bias: polar residues. Positions Ser-124 to Ser-140 are enriched in low complexity. 2 stretches are compositionally biased toward polar residues: residues Val-143 to Asn-152 and Gln-583 to Asp-596.

It belongs to the mitoguardin family. In terms of assembly, homodimer and heterodimer; forms heterodimers with miga1.

It localises to the mitochondrion outer membrane. Its function is as follows. Regulator of mitochondrial fusion: acts by forming homo- and heterodimers at the mitochondrial outer membrane and facilitating the formation of pld6/MitoPLD dimers. May act by regulating phospholipid metabolism via pld6/MitoPLD. In Danio rerio (Zebrafish), this protein is Mitoguardin 2.